A 253-amino-acid polypeptide reads, in one-letter code: Triosephosphate isomerase (253 aa).

8 to 10 provides a ligand contact to substrate; sequence NWK. Histidine 93 functions as the Electrophile in the catalytic mechanism. Glutamate 165 serves as the catalytic Proton acceptor. Residues glycine 171, serine 210, and 231–232 each bind substrate; that span reads GG.

Belongs to the triosephosphate isomerase family. As to quaternary structure, homodimer.

The protein resides in the cytoplasm. It catalyses the reaction D-glyceraldehyde 3-phosphate = dihydroxyacetone phosphate. The protein operates within carbohydrate biosynthesis; gluconeogenesis. Its pathway is carbohydrate degradation; glycolysis; D-glyceraldehyde 3-phosphate from glycerone phosphate: step 1/1. Functionally, involved in the gluconeogenesis. Catalyzes stereospecifically the conversion of dihydroxyacetone phosphate (DHAP) to D-glyceraldehyde-3-phosphate (G3P). The sequence is that of Triosephosphate isomerase from Francisella tularensis subsp. holarctica (strain FTNF002-00 / FTA).